Here is a 379-residue protein sequence, read N- to C-terminus: Lipoyl synthase 2, mitochondrial (379 aa).

The [4Fe-4S] cluster site is built by Cys-106, Cys-111, Cys-117, Cys-137, Cys-141, Cys-144, and Ser-352. The Radical SAM core domain maps to 122 to 341 (EHGTQTATIM…EERGNELGFL (220 aa)).

Belongs to the radical SAM superfamily. Lipoyl synthase family. [4Fe-4S] cluster is required as a cofactor.

It localises to the mitochondrion. It carries out the reaction [[Fe-S] cluster scaffold protein carrying a second [4Fe-4S](2+) cluster] + N(6)-octanoyl-L-lysyl-[protein] + 2 oxidized [2Fe-2S]-[ferredoxin] + 2 S-adenosyl-L-methionine + 4 H(+) = [[Fe-S] cluster scaffold protein] + N(6)-[(R)-dihydrolipoyl]-L-lysyl-[protein] + 4 Fe(3+) + 2 hydrogen sulfide + 2 5'-deoxyadenosine + 2 L-methionine + 2 reduced [2Fe-2S]-[ferredoxin]. The protein operates within protein modification; protein lipoylation via endogenous pathway; protein N(6)-(lipoyl)lysine from octanoyl-[acyl-carrier-protein]: step 2/2. In terms of biological role, catalyzes the radical-mediated insertion of two sulfur atoms into the C-6 and C-8 positions of the octanoyl moiety bound to the lipoyl domains of lipoate-dependent enzymes, thereby converting the octanoylated domains into lipoylated derivatives. The chain is Lipoyl synthase 2, mitochondrial from Drosophila yakuba (Fruit fly).